The chain runs to 130 residues: Small ribosomal subunit protein uS11 (130 aa).

Belongs to the universal ribosomal protein uS11 family. Part of the 30S ribosomal subunit. Interacts with proteins S7 and S18. Binds to IF-3.

In terms of biological role, located on the platform of the 30S subunit, it bridges several disparate RNA helices of the 16S rRNA. Forms part of the Shine-Dalgarno cleft in the 70S ribosome. In Ruegeria pomeroyi (strain ATCC 700808 / DSM 15171 / DSS-3) (Silicibacter pomeroyi), this protein is Small ribosomal subunit protein uS11.